Consider the following 335-residue polypeptide: Aspartate--ammonia ligase (335 aa).

The protein belongs to the class-II aminoacyl-tRNA synthetase family. AsnA subfamily.

The protein localises to the cytoplasm. The enzyme catalyses L-aspartate + NH4(+) + ATP = L-asparagine + AMP + diphosphate + H(+). It participates in amino-acid biosynthesis; L-asparagine biosynthesis; L-asparagine from L-aspartate (ammonia route): step 1/1. The chain is Aspartate--ammonia ligase from Levilactobacillus brevis (strain ATCC 367 / BCRC 12310 / CIP 105137 / JCM 1170 / LMG 11437 / NCIMB 947 / NCTC 947) (Lactobacillus brevis).